We begin with the raw amino-acid sequence, 366 residues long: sn-glycerol-3-phosphate import ATP-binding protein UgpC (366 aa).

Residues 4–235 enclose the ABC transporter domain; the sequence is LSLRNVQKTY…PASTFVAGFI (232 aa). 37-44 is an ATP binding site; sequence GPSGCGKS.

It belongs to the ABC transporter superfamily. sn-glycerol-3-phosphate importer (TC 3.A.1.1.3) family. As to quaternary structure, the complex is composed of two ATP-binding proteins (UgpC), two transmembrane proteins (UgpA and UgpE) and a solute-binding protein (UgpB).

It is found in the cell inner membrane. It carries out the reaction sn-glycerol 3-phosphate(out) + ATP + H2O = sn-glycerol 3-phosphate(in) + ADP + phosphate + H(+). Functionally, part of the ABC transporter complex UgpBAEC involved in sn-glycerol-3-phosphate (G3P) import. Responsible for energy coupling to the transport system. In Cupriavidus necator (strain ATCC 17699 / DSM 428 / KCTC 22496 / NCIMB 10442 / H16 / Stanier 337) (Ralstonia eutropha), this protein is sn-glycerol-3-phosphate import ATP-binding protein UgpC.